The chain runs to 52 residues: UPF0391 membrane protein ACIAD3602 (52 aa).

2 helical membrane passes run 6–26 (IIFAVIALIASLLGFGGVAGL) and 30–50 (FAVILLVVAVILAIVGFISRG).

This sequence belongs to the UPF0391 family.

It is found in the cell membrane. The sequence is that of UPF0391 membrane protein ACIAD3602 from Acinetobacter baylyi (strain ATCC 33305 / BD413 / ADP1).